The following is a 154-amino-acid chain: MQGNQAVVDYMNELLSGELAARDQYFIHSRLYSEWGYTKLFERLNHEMEEETTHAEDFIRRILMLGGTPKMARAELNIGTDVVSCLKADLQTEYEVRDALKKGIKLCEEAQDYVSRDLMVAQLKDTEEDHAHWLEQQLRLIELIGEGNYYQSQL.

The 145-residue stretch at 1-145 (MQGNQAVVDY…QQLRLIELIG (145 aa)) folds into the Ferritin-like diiron domain. Glu-18, Glu-51, His-54, Glu-93, Glu-127, and His-130 together coordinate Fe cation.

This sequence belongs to the bacterioferritin family. As to quaternary structure, heterooligomer of 24 subunits, arranged as 12 dimers, that are packed together to form an approximately spherical molecule with a central cavity, in which large amounts of iron can be deposited.

The catalysed reaction is 4 Fe(2+) + O2 + 4 H(+) = 4 Fe(3+) + 2 H2O. It carries out the reaction Fe(2+)(in) = Fe(2+)(out). Its function is as follows. Iron-storage protein, whose ferroxidase center binds Fe(2+), oxidizes it using dioxygen to Fe(3+), and participates in the subsequent Fe(3+) oxide mineral core formation within the central cavity of the BFR protein shell. The chain is Bacterial ferritin (bfrA) from Neisseria meningitidis serogroup A / serotype 4A (strain DSM 15465 / Z2491).